Reading from the N-terminus, the 253-residue chain is Ubiquinone biosynthesis O-methyltransferase (253 aa).

Positions 47, 78, 99, and 141 each coordinate S-adenosyl-L-methionine.

It belongs to the methyltransferase superfamily. UbiG/COQ3 family.

It catalyses the reaction a 3-demethylubiquinol + S-adenosyl-L-methionine = a ubiquinol + S-adenosyl-L-homocysteine + H(+). The enzyme catalyses a 3-(all-trans-polyprenyl)benzene-1,2-diol + S-adenosyl-L-methionine = a 2-methoxy-6-(all-trans-polyprenyl)phenol + S-adenosyl-L-homocysteine + H(+). The protein operates within cofactor biosynthesis; ubiquinone biosynthesis. O-methyltransferase that catalyzes the 2 O-methylation steps in the ubiquinone biosynthetic pathway. This is Ubiquinone biosynthesis O-methyltransferase from Rhodopseudomonas palustris (strain BisB5).